We begin with the raw amino-acid sequence, 130 residues long: Ribonuclease P protein component 2 (130 aa).

Belongs to the eukaryotic/archaeal RNase P protein component 2 family. In terms of assembly, consists of a catalytic RNA component and at least 4-5 protein subunits.

Its subcellular location is the cytoplasm. The enzyme catalyses Endonucleolytic cleavage of RNA, removing 5'-extranucleotides from tRNA precursor.. Part of ribonuclease P, a protein complex that generates mature tRNA molecules by cleaving their 5'-ends. The chain is Ribonuclease P protein component 2 from Methanococcus maripaludis (strain C5 / ATCC BAA-1333).